The chain runs to 335 residues: Probable deoxyhypusine synthase (335 aa).

The active-site Nucleophile is Lys-307.

Belongs to the deoxyhypusine synthase family. NAD(+) is required as a cofactor.

The catalysed reaction is [eIF5A protein]-L-lysine + spermidine = [eIF5A protein]-deoxyhypusine + propane-1,3-diamine. The protein operates within protein modification; eIF5A hypusination. Catalyzes the NAD-dependent oxidative cleavage of spermidine and the subsequent transfer of the butylamine moiety of spermidine to the epsilon-amino group of a specific lysine residue of the eIF-5A precursor protein to form the intermediate deoxyhypusine residue. In Pyrococcus abyssi (strain GE5 / Orsay), this protein is Probable deoxyhypusine synthase (dys).